A 490-amino-acid chain; its full sequence is Auxin transporter-like protein 5 (490 aa).

Residues 1 to 55 are Cytoplasmic-facing; the sequence is MEMANDKVAETVIVGNYVEMESEGKPPQDIKSKLSNFLWHGGSAYDAWFSCASNQ. The chain crosses the membrane as a helical span at residues 56-73; it reads VAQVLLTLPYSFSQLGML. The Extracellular segment spans residues 74-75; sequence SG. A helical transmembrane segment spans residues 76 to 96; the sequence is ILFQLFYGILGSWTAYLISIL. The Cytoplasmic segment spans residues 97-132; that stretch reads YVEYRTRKEREKVNFRSHVIQWFEVLDGLLGKHWRN. The helical transmembrane segment at 133–153 threads the bilayer; it reads VGLGFNCTFLLFGSVIQLIAC. The Extracellular portion of the chain corresponds to 154-168; it reads ASNIYYINDNLDKRT. The chain crosses the membrane as a helical span at residues 169-189; sequence WTYIFGACCATTVFIPSFHNY. Position 190 (Arg-190) is a topological domain, cytoplasmic. Residues 191–211 traverse the membrane as a helical segment; the sequence is IWSFLGLVMTTYTAWYLTIAA. The Extracellular portion of the chain corresponds to 212–227; sequence VLHGQVEGVKHSGPNK. A helical transmembrane segment spans residues 228 to 248; the sequence is IILYFTGATNILYTFGGHAVT. Residues 249–262 lie on the Cytoplasmic side of the membrane; the sequence is VEIMHAMWKPQKFK. Residues 263-283 form a helical membrane-spanning segment; the sequence is AIYLLATLYVLTLTIPSATAV. Over 284-310 the chain is Extracellular; sequence YWAFGDMLLNHSNAFALLPKSPFRDMA. Asn-293 carries N-linked (GlcNAc...) asparagine glycosylation. Residues 311–331 traverse the membrane as a helical segment; the sequence is VILMLIHQFITFGFACTPLYF. The Cytoplasmic segment spans residues 332-352; it reads VWEKTVGMHECKSLCKRALVR. Residues 353–373 traverse the membrane as a helical segment; sequence LPVVIPIWFLAIIFPFFGPIN. At 374–376 the chain is on the extracellular side; that stretch reads STV. Residues 377-397 form a helical membrane-spanning segment; the sequence is GSLLVSFTVYIIPALAHIFTF. Residues 398–420 are Cytoplasmic-facing; sequence KSSSARQNAVEQPPKFVGRWVGT. A helical transmembrane segment spans residues 421–441; sequence FVINVFIVVWVLIVGFGFGGW. Topologically, residues 442–490 are extracellular; the sequence is ASMVNFVHQIDTFGLFTKCYQCPPPTPSVPTMPPHQMNATAPSPHHHHH. A glycan (N-linked (GlcNAc...) asparagine) is linked at Asn-479.

It belongs to the amino acid/polyamine transporter 2 family. Amino acid/auxin permease (AAAP) (TC 2.A.18.1) subfamily. As to expression, shoots and roots of nodulating plants, at low levels.

Its subcellular location is the cell membrane. In terms of biological role, carrier protein involved in proton-driven auxin influx. Mediates the formation of auxin gradient from developing leaves (site of auxin biosynthesis) to tips by contributing to the loading of auxin in vascular tissues and facilitating acropetal (base to tip) auxin transport within inner tissues of the root apex, and basipetal (tip to base) auxin transport within outer tissues of the root apex. May be involved in lateral roots and nodules formation. The protein is Auxin transporter-like protein 5 (LAX5) of Medicago truncatula (Barrel medic).